The chain runs to 137 residues: Small ribosomal subunit protein bS6 (137 aa).

The segment at 96 to 137 (ITEASPMAKAKDERDTRRSSEERAPRAEAAEEVEESAENTAE) is disordered. The span at 104 to 124 (KAKDERDTRRSSEERAPRAEA) shows a compositional bias: basic and acidic residues. Residues 125–137 (AEEVEESAENTAE) are compositionally biased toward acidic residues.

Belongs to the bacterial ribosomal protein bS6 family.

In terms of biological role, binds together with bS18 to 16S ribosomal RNA. The protein is Small ribosomal subunit protein bS6 of Shewanella halifaxensis (strain HAW-EB4).